The chain runs to 354 residues: Uroporphyrinogen decarboxylase (354 aa).

Residues 27 to 31, Asp77, Tyr154, Ser209, and His327 contribute to the substrate site; that span reads RQAGR.

This sequence belongs to the uroporphyrinogen decarboxylase family. As to quaternary structure, homodimer.

It is found in the cytoplasm. It carries out the reaction uroporphyrinogen III + 4 H(+) = coproporphyrinogen III + 4 CO2. Its pathway is porphyrin-containing compound metabolism; protoporphyrin-IX biosynthesis; coproporphyrinogen-III from 5-aminolevulinate: step 4/4. Catalyzes the decarboxylation of four acetate groups of uroporphyrinogen-III to yield coproporphyrinogen-III. This chain is Uroporphyrinogen decarboxylase, found in Shewanella halifaxensis (strain HAW-EB4).